A 562-amino-acid chain; its full sequence is NAD-dependent malic enzyme (562 aa).

The Proton donor role is filled by Tyr101. NAD(+) is bound at residue Arg154. Catalysis depends on Lys172, which acts as the Proton acceptor. Positions 243, 244, and 267 each coordinate a divalent metal cation. Residues Asp267 and Asn415 each coordinate NAD(+).

This sequence belongs to the malic enzymes family. As to quaternary structure, homotetramer. The cofactor is Mg(2+). Requires Mn(2+) as cofactor.

It catalyses the reaction (S)-malate + NAD(+) = pyruvate + CO2 + NADH. The catalysed reaction is oxaloacetate + H(+) = pyruvate + CO2. The polypeptide is NAD-dependent malic enzyme (Shewanella denitrificans (strain OS217 / ATCC BAA-1090 / DSM 15013)).